The primary structure comprises 185 residues: Ribosome-recycling factor (185 aa).

This sequence belongs to the RRF family.

It localises to the cytoplasm. Responsible for the release of ribosomes from messenger RNA at the termination of protein biosynthesis. May increase the efficiency of translation by recycling ribosomes from one round of translation to another. The polypeptide is Ribosome-recycling factor (Bacillus cereus (strain B4264)).